The primary structure comprises 417 residues: NADH-quinone oxidoreductase subunit D (417 aa).

The protein belongs to the complex I 49 kDa subunit family. In terms of assembly, NDH-1 is composed of 14 different subunits. Subunits NuoB, C, D, E, F, and G constitute the peripheral sector of the complex.

It localises to the cell inner membrane. It catalyses the reaction a quinone + NADH + 5 H(+)(in) = a quinol + NAD(+) + 4 H(+)(out). In terms of biological role, NDH-1 shuttles electrons from NADH, via FMN and iron-sulfur (Fe-S) centers, to quinones in the respiratory chain. The immediate electron acceptor for the enzyme in this species is believed to be ubiquinone. Couples the redox reaction to proton translocation (for every two electrons transferred, four hydrogen ions are translocated across the cytoplasmic membrane), and thus conserves the redox energy in a proton gradient. The chain is NADH-quinone oxidoreductase subunit D from Aromatoleum aromaticum (strain DSM 19018 / LMG 30748 / EbN1) (Azoarcus sp. (strain EbN1)).